The primary structure comprises 670 residues: DNA ligase (670 aa).

NAD(+) is bound by residues 33-37, 82-83, and E113; these read DAEFD and SL. K115 functions as the N6-AMP-lysine intermediate in the catalytic mechanism. Residues R136, E170, K285, and K309 each contribute to the NAD(+) site. Zn(2+)-binding residues include C403, C406, C421, and C427. The 84-residue stretch at 587–670 folds into the BRCT domain; that stretch reads EQNLYLSGKT…EVLKAGDNNG (84 aa).

The protein belongs to the NAD-dependent DNA ligase family. LigA subfamily. Mg(2+) is required as a cofactor. Requires Mn(2+) as cofactor.

It catalyses the reaction NAD(+) + (deoxyribonucleotide)n-3'-hydroxyl + 5'-phospho-(deoxyribonucleotide)m = (deoxyribonucleotide)n+m + AMP + beta-nicotinamide D-nucleotide.. DNA ligase that catalyzes the formation of phosphodiester linkages between 5'-phosphoryl and 3'-hydroxyl groups in double-stranded DNA using NAD as a coenzyme and as the energy source for the reaction. It is essential for DNA replication and repair of damaged DNA. The sequence is that of DNA ligase from Halothermothrix orenii (strain H 168 / OCM 544 / DSM 9562).